We begin with the raw amino-acid sequence, 426 residues long: Histidinol dehydrogenase (426 aa).

Residues Tyr-126, Gln-188, and Asn-210 each contribute to the NAD(+) site. Ser-233, Gln-255, and His-258 together coordinate substrate. Zn(2+) is bound by residues Gln-255 and His-258. Active-site proton acceptor residues include Glu-323 and His-324. Residues His-324, Asp-357, Glu-411, and His-416 each contribute to the substrate site. Zn(2+) is bound at residue Asp-357. His-416 serves as a coordination point for Zn(2+).

It belongs to the histidinol dehydrogenase family. Requires Zn(2+) as cofactor.

It carries out the reaction L-histidinol + 2 NAD(+) + H2O = L-histidine + 2 NADH + 3 H(+). It participates in amino-acid biosynthesis; L-histidine biosynthesis; L-histidine from 5-phospho-alpha-D-ribose 1-diphosphate: step 9/9. Catalyzes the sequential NAD-dependent oxidations of L-histidinol to L-histidinaldehyde and then to L-histidine. This Heliobacterium mobile (Heliobacillus mobilis) protein is Histidinol dehydrogenase.